Here is a 559-residue protein sequence, read N- to C-terminus: Nicotinate phosphoribosyltransferase 1 (559 aa).

Nicotinate-binding residues include tyrosine 33 and threonine 221. The residue at position 224 (histidine 224) is a Phosphohistidine. Residue arginine 331 coordinates nicotinate. Threonine 393 is a 5-phospho-alpha-D-ribose 1-diphosphate binding site.

Belongs to the NAPRTase family. It depends on Mg(2+) as a cofactor. Mn(2+) serves as cofactor. In terms of processing, transiently phosphorylated on a His residue during the reaction cycle. Phosphorylation strongly increases the affinity for substrates and increases the rate of nicotinate D-ribonucleotide production. Dephosphorylation regenerates the low-affinity form of the enzyme, leading to product release.

It carries out the reaction nicotinate + 5-phospho-alpha-D-ribose 1-diphosphate + ATP + H2O = nicotinate beta-D-ribonucleotide + ADP + phosphate + diphosphate. Its pathway is cofactor biosynthesis; NAD(+) biosynthesis; nicotinate D-ribonucleotide from nicotinate: step 1/1. Its function is as follows. Catalyzes the first step in the biosynthesis of NAD from nicotinic acid, the ATP-dependent synthesis of beta-nicotinate D-ribonucleotide from nicotinate and 5-phospho-D-ribose 1-phosphate. Helps prevent cellular oxidative stress via its role in NAD biosynthesis. In Arabidopsis thaliana (Mouse-ear cress), this protein is Nicotinate phosphoribosyltransferase 1.